The primary structure comprises 128 residues: uncharacterized protein (128 aa).

The next 4 membrane-spanning stretches (helical) occupy residues 2 to 22 (LPFYFLSVATNAAIGFILTVL), 34 to 54 (FLYDATFSLVLALLSGIAAVC), 64 to 84 (LPVLGDLIPTLAGGTGCALFL), and 108 to 128 (LGLFSLAASILHLLFAPTLFL).

It localises to the cell membrane. This is an uncharacterized protein from Treponema pallidum (strain Nichols).